A 222-amino-acid chain; its full sequence is Pyrrolidone-carboxylate peptidase (222 aa).

Residues glutamate 80, cysteine 146, and histidine 170 contribute to the active site.

The protein belongs to the peptidase C15 family. As to quaternary structure, homotetramer.

Its subcellular location is the cytoplasm. It carries out the reaction Release of an N-terminal pyroglutamyl group from a polypeptide, the second amino acid generally not being Pro.. Its function is as follows. Removes 5-oxoproline from various penultimate amino acid residues except L-proline. In Mycobacterium marinum (strain ATCC BAA-535 / M), this protein is Pyrrolidone-carboxylate peptidase.